A 261-amino-acid chain; its full sequence is (3R)-3-hydroxyacyl-CoA dehydrogenase (261 aa).

Residues 15 to 23 (LVTGAGSGI) and 42 to 43 (DL) each bind NAD(+). Ser-60 bears the Phosphoserine mark. 74 to 76 (ADV) provides a ligand contact to NAD(+). Ser-156 contacts substrate. Lys-160 carries the N6-succinyllysine modification. Tyr-169 acts as the Proton acceptor in catalysis. NAD(+) contacts are provided by residues 169-173 (YAASK) and 202-204 (IAT). N6-succinyllysine is present on Lys-173.

Belongs to the short-chain dehydrogenases/reductases (SDR) family. Heterotetramer with CBR4; contains two molecules of HSD17B8 and CBR4. In terms of tissue distribution, widely expressed, particularly abundant in prostate, placenta and kidney. Expressed at protein level in various tissues like brain, cerebellum, heart, lung, kidney, ovary, testis, adrenals and prostate.

The protein localises to the mitochondrion matrix. It carries out the reaction a (3R)-3-hydroxyacyl-CoA + NAD(+) = a 3-oxoacyl-CoA + NADH + H(+). It catalyses the reaction 17beta-estradiol + NAD(+) = estrone + NADH + H(+). The enzyme catalyses testosterone + NAD(+) = androst-4-ene-3,17-dione + NADH + H(+). The catalysed reaction is 17beta-hydroxy-5alpha-androstan-3-one + NAD(+) = 5alpha-androstan-3,17-dione + NADH + H(+). Its pathway is steroid biosynthesis; estrogen biosynthesis. It participates in lipid metabolism; fatty acid biosynthesis. It functions in the pathway lipid metabolism; mitochondrial fatty acid beta-oxidation. Required for the solubility and assembly of the heterotetramer 3-ketoacyl-[acyl carrier protein] (ACP) reductase functional complex (KAR or KAR1) that forms part of the mitochondrial fatty acid synthase (mtFAS). Alpha-subunit of the KAR complex that acts as a scaffold protein required for the stability of carbonyl reductase type-4 (CBR4, beta-subunit of the KAR complex) and for its 3-ketoacyl-ACP reductase activity, thereby participating in mitochondrial fatty acid biosynthesis. Catalyzes the NAD-dependent conversion of (3R)-3-hydroxyacyl-CoA into 3-ketoacyl-CoA (3-oxoacyl-CoA) with no chain length preference; this enzymatic activity is not needed for the KAR function. Prefers (3R)-3-hydroxyacyl-CoA over (3S)-3-hydroxyacyl-CoA and displays enzymatic activity only in the presence of NAD(+). Cooperates with enoyl-CoA hydratase 1 in mitochondria, together they constitute an alternative route to the auxiliary enzyme pathways for the breakdown of Z-PUFA (cis polyunsaturated fatty acid) enoyl-esters. NAD-dependent 17-beta-hydroxysteroid dehydrogenase with highest activity towards estradiol (17beta-estradiol or E2). Has very low activity towards testosterone and dihydrotestosterone (17beta-hydroxy-5alpha-androstan-3-one). Primarily an oxidative enzyme, it can switch to a reductive mode determined in the appropriate physiologic milieu and catalyze the reduction of estrone (E1) to form biologically active 17beta-estradiol. The chain is (3R)-3-hydroxyacyl-CoA dehydrogenase (HSD17B8) from Homo sapiens (Human).